A 178-amino-acid chain; its full sequence is Ribosome maturation factor RimP (178 aa).

Belongs to the RimP family.

It localises to the cytoplasm. In terms of biological role, required for maturation of 30S ribosomal subunits. In Streptococcus pyogenes serotype M1, this protein is Ribosome maturation factor RimP.